We begin with the raw amino-acid sequence, 467 residues long: Acetaldehyde dehydrogenase (acetylating) EutE (467 aa).

The targets protein to the BMC stretch occupies residues 1 to 19; the sequence is MNQQDIEQVVKAVLLKMKD.

This sequence belongs to the EutE/PduP family. Interacts with EutS, which targets it to the interior of the BMC.

The protein resides in the bacterial microcompartment. It carries out the reaction acetaldehyde + NAD(+) + CoA = acetyl-CoA + NADH + H(+). It functions in the pathway amine and polyamine degradation; ethanolamine degradation. Acts as the second step in ethanolamine degradation by converting acetaldehyde into acetyl-CoA. Has a very strong preference for NAD(+) over NADP(+) in both catalytic directions. May play a role in bacterial microcompartment (BMC) assembly or maintenance. Directly targeted to the BMC. Its function is as follows. Expression of the eut operon allows this bacteria to use ethanolamine (EA) as a carbon, nitrogen and energy source. It relies on cobalamin (vitamin B12) both as a cofactor for the ethanolamine ammonia-lyase (EAL) activity and to induce the operon. EA enhances bacterial survival in macrophages in a concentration-dependent manner, suggesting it is an important nutrient during infection. This chain is Acetaldehyde dehydrogenase (acetylating) EutE, found in Salmonella typhimurium (strain LT2 / SGSC1412 / ATCC 700720).